The following is a 205-amino-acid chain: GTP cyclohydrolase-2 (205 aa).

49 to 53 is a GTP binding site; it reads RLHSE. Residues C54, C65, and C67 each coordinate Zn(2+). GTP is bound by residues Q70, 92-94, and T114; that span reads EGR. Residue D126 is the Proton acceptor of the active site. The Nucleophile role is filled by R128. GTP-binding residues include T149 and K154.

It belongs to the GTP cyclohydrolase II family. The cofactor is Zn(2+).

The enzyme catalyses GTP + 4 H2O = 2,5-diamino-6-hydroxy-4-(5-phosphoribosylamino)-pyrimidine + formate + 2 phosphate + 3 H(+). It functions in the pathway cofactor biosynthesis; riboflavin biosynthesis; 5-amino-6-(D-ribitylamino)uracil from GTP: step 1/4. Catalyzes the conversion of GTP to 2,5-diamino-6-ribosylamino-4(3H)-pyrimidinone 5'-phosphate (DARP), formate and pyrophosphate. This chain is GTP cyclohydrolase-2, found in Pseudomonas paraeruginosa (strain DSM 24068 / PA7) (Pseudomonas aeruginosa (strain PA7)).